A 367-amino-acid chain; its full sequence is MAKLSLRNVQKTYAGGTQVVHGIDMEIADGEFIVIVGPSGCGKSTLLRMVAGLETITGGEIHIGDKVVNDLEPAARDIAMVFQNYALYPHMSVYDNMAYGLKIRGMSKGEIEQRVKHAAGILELASLLDRKPRALSGGQRQRVAMGRAIVREPSVFLFDEPLSNLDAKLRVQMRLELKDLHRRLKTTSLYVTHDQVEAMTLADRMMVLNGGRVEQIGTPLEVYARPASTFVAGFIGSPPMNLVPVARNGSGQGVAQMRVQPKDGQAAATLGHLPMGLHLPEQALMGLRPEHIEPCAVHEAIAELDVRVVEALGADSFAYGSLGGQPIVVRLDSQTQVRAGDKLPITASAEHLHFFDVQSGKRIEAQA.

Positions 4-235 constitute an ABC transporter domain; the sequence is LSLRNVQKTY…PASTFVAGFI (232 aa). Position 37 to 44 (37 to 44) interacts with ATP; the sequence is GPSGCGKS.

It belongs to the ABC transporter superfamily. sn-glycerol-3-phosphate importer (TC 3.A.1.1.3) family. In terms of assembly, the complex is composed of two ATP-binding proteins (UgpC), two transmembrane proteins (UgpA and UgpE) and a solute-binding protein (UgpB).

Its subcellular location is the cell inner membrane. The enzyme catalyses sn-glycerol 3-phosphate(out) + ATP + H2O = sn-glycerol 3-phosphate(in) + ADP + phosphate + H(+). Functionally, part of the ABC transporter complex UgpBAEC involved in sn-glycerol-3-phosphate (G3P) import. Responsible for energy coupling to the transport system. The chain is sn-glycerol-3-phosphate import ATP-binding protein UgpC from Cupriavidus metallidurans (strain ATCC 43123 / DSM 2839 / NBRC 102507 / CH34) (Ralstonia metallidurans).